The primary structure comprises 197 residues: MKTAVIASLIAGAAAFAPAKNAARTSVATNMAFEDELGAQPPLGFFDPLGLVADGDQEKFDRLRYVEIKHGRISMLAVVGYLVQEAGVRLPGTIDYSGKTFAEIPSLAAFKEIPAGGLVQLLFFIGVLESSVMRDLTGEAEFVGDFRNGAIDFGWDTFDEETQFKKRAIELNQGRAAQMGILALMVHEQLGVSLLPQ.

Residues 1–31 (MKTAVIASLIAGAAAFAPAKNAARTSVATNM) constitute a chloroplast transit peptide. The next 3 membrane-spanning stretches (helical) occupy residues 73–94 (ISMLAVVGYLVQEAGVRLPGTI), 114–133 (PAGGLVQLLFFIGVLESSVM), and 174–196 (GRAAQMGILALMVHEQLGVSLLP).

This sequence belongs to the fucoxanthin chlorophyll protein family. The LHC complex of chromophytic algae is composed of fucoxanthin, chlorophyll A and C bound non-covalently by fucoxanthin chlorophyll proteins (FCPs). The ratio of the pigments in LHC; fucoxanthin: chlorophyll C: chlorophyll A; (0.6-1): (0.1-0.3): (1).

It localises to the plastid. The protein localises to the chloroplast thylakoid membrane. Functionally, the light-harvesting complex (LHC) functions as a light receptor, it captures and delivers excitation energy to photosystems with which it is closely associated. Energy is transferred from the carotenoid and chlorophyll C (or B) to chlorophyll A and the photosynthetic reaction centers where it is used to synthesize ATP and reducing power. This chain is Fucoxanthin-chlorophyll a-c binding protein D, chloroplastic (FCPD), found in Phaeodactylum tricornutum (Diatom).